The sequence spans 234 residues: Leucyl/phenylalanyl-tRNA--protein transferase (234 aa).

Belongs to the L/F-transferase family.

The protein resides in the cytoplasm. It catalyses the reaction N-terminal L-lysyl-[protein] + L-leucyl-tRNA(Leu) = N-terminal L-leucyl-L-lysyl-[protein] + tRNA(Leu) + H(+). It carries out the reaction N-terminal L-arginyl-[protein] + L-leucyl-tRNA(Leu) = N-terminal L-leucyl-L-arginyl-[protein] + tRNA(Leu) + H(+). The catalysed reaction is L-phenylalanyl-tRNA(Phe) + an N-terminal L-alpha-aminoacyl-[protein] = an N-terminal L-phenylalanyl-L-alpha-aminoacyl-[protein] + tRNA(Phe). Its function is as follows. Functions in the N-end rule pathway of protein degradation where it conjugates Leu, Phe and, less efficiently, Met from aminoacyl-tRNAs to the N-termini of proteins containing an N-terminal arginine or lysine. This Tolumonas auensis (strain DSM 9187 / NBRC 110442 / TA 4) protein is Leucyl/phenylalanyl-tRNA--protein transferase.